A 282-amino-acid chain; its full sequence is Transcription factor LBX1 (282 aa).

Over residues 1 to 20 (MTSKEDGKAAPGEERRRSPL) the composition is skewed to basic and acidic residues. The segment at 1–36 (MTSKEDGKAAPGEERRRSPLDHLPPPANSNKPLTPF) is disordered. Positions 125 to 184 (RRKSRTAFTNHQIYELEKRFLYQKYLSPADRDQIAQQLGLTNAQVITWFQNRRAKLKRDL) form a DNA-binding region, homeobox. A disordered region spans residues 210–282 (ELEQNSEASG…EEDEEIDVDD (73 aa)). A compositionally biased stretch (gly residues) spans 218-227 (SGGGGGGGCG). Acidic residues predominate over residues 269-282 (CSEDEEDEEIDVDD).

In terms of assembly, interacts with SKOR1 which acts as a transcriptional corepressor. Expressed in the dorsal part of the spinal cord and hindbrain and in presumptive myogenic cells in lateral regions of differentiating somites.

Its subcellular location is the nucleus. Its function is as follows. Transcription factor required for the development of GABAergic interneurons in the dorsal horn of the spinal cord and migration and further development of hypaxial muscle precursor cells for limb muscles, diaphragm and hypoglossal cord. This is Transcription factor LBX1 (Lbx1) from Mus musculus (Mouse).